Reading from the N-terminus, the 128-residue chain is Large ribosomal subunit protein bL17 (128 aa).

The protein belongs to the bacterial ribosomal protein bL17 family. In terms of assembly, part of the 50S ribosomal subunit. Contacts protein L32.

In Baumannia cicadellinicola subsp. Homalodisca coagulata, this protein is Large ribosomal subunit protein bL17.